The following is a 411-amino-acid chain: Translation initiation factor 2 subunit gamma (411 aa).

The region spanning 9–203 (QAEVNIGMVG…AIEDFIPTPK (195 aa)) is the tr-type G domain. A G1 region spans residues 18–25 (GHVDHGKT). Residues aspartate 21, threonine 25, glycine 46, and threonine 48 each contribute to the Mg(2+) site. 21-26 (DHGKTT) lines the GTP pocket. The tract at residues 46–50 (GITIK) is G2. Positions 61, 64, 73, and 76 each coordinate Zn(2+). Residues 90 to 93 (DAPG) are G3. Residues 146–149 (NKIE) and 181–183 (SAL) each bind GTP. A G4 region spans residues 146–149 (NKIE). The segment at 181–183 (SAL) is G5.

It belongs to the TRAFAC class translation factor GTPase superfamily. Classic translation factor GTPase family. EIF2G subfamily. Heterotrimer composed of an alpha, a beta and a gamma chain. The cofactor is Mg(2+).

It carries out the reaction GTP + H2O = GDP + phosphate + H(+). In terms of biological role, eIF-2 functions in the early steps of protein synthesis by forming a ternary complex with GTP and initiator tRNA. This chain is Translation initiation factor 2 subunit gamma, found in Pyrococcus abyssi (strain GE5 / Orsay).